Consider the following 65-residue polypeptide: Sodium channel neurotoxin MeuNaTxalpha-9 (65 aa).

The 63-residue stretch at 2–64 folds into the LCN-type CS-alpha/beta domain; it reads RDGYIANDRN…VPIRIPGECR (63 aa). Disulfide bonds link Cys-12–Cys-63, Cys-16–Cys-36, Cys-22–Cys-46, and Cys-26–Cys-48. Arginine amide is present on Arg-64.

The protein belongs to the long (4 C-C) scorpion toxin superfamily. Sodium channel inhibitor family. Alpha subfamily. Expressed by the venom gland.

It is found in the secreted. Functionally, alpha toxins bind voltage-independently at site-3 of sodium channels (Nav) and inhibit the inactivation of the activated channels, thereby blocking neuronal transmission. This Mesobuthus eupeus (Lesser Asian scorpion) protein is Sodium channel neurotoxin MeuNaTxalpha-9.